A 148-amino-acid chain; its full sequence is Calmodulin-related protein 97A (148 aa).

4 consecutive EF-hand domains span residues 7–42, 43–78, 80–115, and 116–148; these read EQIAEFKDAFVQFDKEGTGKIATRELGTLMRTLGQN, PTEAELQDLIAEAENNNNGQLNFTEFCGIMAKQMRE, DTEEEMREAFKIFDRDGDGFISPAELRFVMINLGEK, and VTDEEIDEMIREADFDGDGMINYEEFVWMISQK. 17 residues coordinate Ca(2+): D20, T24, K26, E31, N58, N60, Q62, E67, D93, D95, D97, E104, D129, D131, D133, M135, and E140.

This sequence belongs to the calmodulin family.

In terms of biological role, may be involved in calcium-mediated signal transduction. The polypeptide is Calmodulin-related protein 97A (Acam) (Drosophila melanogaster (Fruit fly)).